Here is a 276-residue protein sequence, read N- to C-terminus: Phospholipid phosphatase 2 (276 aa).

Over 1–4 the chain is Cytoplasmic; the sequence is MERR. A helical membrane pass occupies residues 5–25; it reads WVFVLLDVLCVLVASLPFIIL. At 26-51 the chain is on the lumenal side; sequence TLVNAPYKRGFYCGDDSIRYPYRPDT. Residues 52–72 form a helical membrane-spanning segment; sequence ITHGLMAGVIITATVVLVSSG. The Cytoplasmic segment spans residues 73 to 87; it reads EAYLVYTDRLYSRSD. A helical transmembrane segment spans residues 88-108; sequence FNNYVAAIYKVLGTFLFGAAV. Topologically, residues 109–161 are lumenal; the sequence is SQSLTDLAKYMIGRLRPSFLAVCDPDWSRVNCSGYVQVEVCRGSPANVTEARL. The interval 117-125 is phosphatase sequence motif I; the sequence is KYMIGRLRP. Asn-139 and Asn-155 each carry an N-linked (GlcNAc...) asparagine glycan. Residues 162–182 form a helical membrane-spanning segment; it reads SFYSGHSSFGMYCMLFLALYV. The tract at residues 164–167 is phosphatase sequence motif II; sequence YSGH. His-167 functions as the Proton donors in the catalytic mechanism. Over 183-189 the chain is Cytoplasmic; that stretch reads QARLCWK. The chain crosses the membrane as a helical span at residues 190–210; sequence WARLLRPTVQFFLVAFAIYVG. Topologically, residues 211-225 are lumenal; it reads YTRVSDNKHHWSDVL. Positions 212–223 are phosphatase sequence motif III; that stretch reads TRVSDNKHHWSD. His-219 (nucleophile) is an active-site residue. Residues 226-246 form a helical membrane-spanning segment; sequence VGLLQGALVACLTVCYVSDFF. At 247-276 the chain is on the cytoplasmic side; it reads KSRPPQSCQENEESERKPSLSLTLTLGDRP. The interval 252-276 is disordered; it reads QSCQENEESERKPSLSLTLTLGDRP.

This sequence belongs to the PA-phosphatase related phosphoesterase family. As to quaternary structure, forms functional homodimers and homooligomers. Can also form heterooligomers with PLPP1 and PLPP3. In terms of processing, N-glycosylated. In terms of tissue distribution, expressed in the brain.

It is found in the membrane. The protein localises to the cell membrane. It localises to the early endosome membrane. Its subcellular location is the endoplasmic reticulum membrane. It carries out the reaction a 1,2-diacyl-sn-glycero-3-phosphate + H2O = a 1,2-diacyl-sn-glycerol + phosphate. The enzyme catalyses 1,2-dihexadecanoyl-sn-glycero-3-phosphate + H2O = 1,2-dihexadecanoyl-sn-glycerol + phosphate. It catalyses the reaction 1,2-di-(9Z-octadecenoyl)-sn-glycero-3-phosphate + H2O = 1,2-di-(9Z-octadecenoyl)-sn-glycerol + phosphate. The catalysed reaction is a monoacyl-sn-glycero-3-phosphate + H2O = a monoacylglycerol + phosphate. It carries out the reaction (9Z)-octadecenoyl-sn-glycero-3-phosphate + H2O = (9Z-octadecenoyl)-glycerol + phosphate. The enzyme catalyses sphing-4-enine 1-phosphate + H2O = sphing-4-enine + phosphate. It catalyses the reaction an N-acylsphing-4-enine 1-phosphate + H2O = an N-acylsphing-4-enine + phosphate. The catalysed reaction is N-(octanoyl)-sphing-4-enine-1-phosphate + H2O = N-octanoylsphing-4-enine + phosphate. It carries out the reaction N-(9Z-octadecenoyl)-ethanolamine phosphate + H2O = N-(9Z-octadecenoyl) ethanolamine + phosphate. It participates in lipid metabolism; phospholipid metabolism. With respect to regulation, magnesium-independent phospholipid phosphatase. Insensitive to N-ethylmaleimide. In terms of biological role, magnesium-independent phospholipid phosphatase that catalyzes the dephosphorylation of a variety of glycerolipid and sphingolipid phosphate esters including phosphatidate/PA, lysophosphatidate/LPA, sphingosine 1-phosphate/S1P and ceramide 1-phosphate/C1P. Has no apparent extracellular phosphatase activity and therefore most probably acts intracellularly. Also acts on N-oleoyl ethanolamine phosphate/N-(9Z-octadecenoyl)-ethanolamine phosphate, a potential physiological compound. Through dephosphorylation of these bioactive lipid mediators produces new bioactive compounds and may regulate signal transduction in different cellular processes. Indirectly regulates, for instance, cell cycle G1/S phase transition through its phospholipid phosphatase activity. The chain is Phospholipid phosphatase 2 from Rattus norvegicus (Rat).